The primary structure comprises 228 residues: Cytochrome c oxidase subunit 2 (228 aa).

The Mitochondrial intermembrane portion of the chain corresponds to Met1–His26. Residues Ala27–Asn48 traverse the membrane as a helical segment. At Lys49 to Glu62 the chain is on the mitochondrial matrix side. Residues Thr63–Arg82 traverse the membrane as a helical segment. Topologically, residues Leu83–Ser228 are mitochondrial intermembrane. Cu cation contacts are provided by His161, Cys196, Glu198, Cys200, His204, and Met207. Glu198 is a binding site for Mg(2+).

This sequence belongs to the cytochrome c oxidase subunit 2 family. Component of the cytochrome c oxidase (complex IV, CIV), a multisubunit enzyme composed of a catalytic core of 3 subunits and several supernumerary subunits. The complex exists as a monomer or a dimer and forms supercomplexes (SCs) in the inner mitochondrial membrane with ubiquinol-cytochrome c oxidoreductase (cytochrome b-c1 complex, complex III, CIII). Cu cation is required as a cofactor.

The protein localises to the mitochondrion inner membrane. It carries out the reaction 4 Fe(II)-[cytochrome c] + O2 + 8 H(+)(in) = 4 Fe(III)-[cytochrome c] + 2 H2O + 4 H(+)(out). Component of the cytochrome c oxidase, the last enzyme in the mitochondrial electron transport chain which drives oxidative phosphorylation. The respiratory chain contains 3 multisubunit complexes succinate dehydrogenase (complex II, CII), ubiquinol-cytochrome c oxidoreductase (cytochrome b-c1 complex, complex III, CIII) and cytochrome c oxidase (complex IV, CIV), that cooperate to transfer electrons derived from NADH and succinate to molecular oxygen, creating an electrochemical gradient over the inner membrane that drives transmembrane transport and the ATP synthase. Cytochrome c oxidase is the component of the respiratory chain that catalyzes the reduction of oxygen to water. Electrons originating from reduced cytochrome c in the intermembrane space (IMS) are transferred via the dinuclear copper A center (CU(A)) of subunit 2 and heme A of subunit 1 to the active site in subunit 1, a binuclear center (BNC) formed by heme A3 and copper B (CU(B)). The BNC reduces molecular oxygen to 2 water molecules using 4 electrons from cytochrome c in the IMS and 4 protons from the mitochondrial matrix. In Artemia franciscana (Brine shrimp), this protein is Cytochrome c oxidase subunit 2 (COII).